The primary structure comprises 335 residues: N-acetyl-gamma-glutamyl-phosphate reductase (335 aa).

Cys-156 is a catalytic residue.

The protein belongs to the NAGSA dehydrogenase family. Type 1 subfamily.

The protein resides in the cytoplasm. The enzyme catalyses N-acetyl-L-glutamate 5-semialdehyde + phosphate + NADP(+) = N-acetyl-L-glutamyl 5-phosphate + NADPH + H(+). Its pathway is amino-acid biosynthesis; L-arginine biosynthesis; N(2)-acetyl-L-ornithine from L-glutamate: step 3/4. Its function is as follows. Catalyzes the NADPH-dependent reduction of N-acetyl-5-glutamyl phosphate to yield N-acetyl-L-glutamate 5-semialdehyde. The chain is N-acetyl-gamma-glutamyl-phosphate reductase from Aeromonas hydrophila subsp. hydrophila (strain ATCC 7966 / DSM 30187 / BCRC 13018 / CCUG 14551 / JCM 1027 / KCTC 2358 / NCIMB 9240 / NCTC 8049).